The sequence spans 272 residues: Probable nitrilase C965.09 (272 aa).

Residues Ala3–Leu244 enclose the CN hydrolase domain. Glu45 serves as the catalytic Proton acceptor. The active-site Proton donor is Lys118. The active-site Nucleophile is Cys150.

It belongs to the carbon-nitrogen hydrolase superfamily.

It is found in the cytoplasm. The protein localises to the nucleus. This Schizosaccharomyces pombe (strain 972 / ATCC 24843) (Fission yeast) protein is Probable nitrilase C965.09.